The chain runs to 377 residues: tRNA-queuosine alpha-mannosyltransferase (377 aa).

The protein belongs to the glycosyltransferase group 1 family. Glycosyltransferase 4 subfamily.

It catalyses the reaction queuosine(34) in tRNA(Asp) + GDP-alpha-D-mannose = O-4''-alpha-D-mannosylqueuosine(34) in tRNA(Asp) + GDP + H(+). Glycosyltransferase that specifically catalyzes mannosylation of cytoplasmic tRNA(Asp) modified with queuosine at position 34 (queuosine(34)). Mannosylates the cyclopentene moiety of queuosine(34) in tRNA(Asp) to form mannosyl-queuosine(34). The protein is tRNA-queuosine alpha-mannosyltransferase of Drosophila melanogaster (Fruit fly).